A 102-amino-acid polypeptide reads, in one-letter code: Cysteine-rich venom protein VAR9 (102 aa).

Residues 1–19 (MILLKLYLTLAAILCQSRG) form the signal peptide. In terms of domain architecture, SCP spans 41-80 (NKHNDLRRTVDPPAKNMLKMSWDNIIAESAKRAALRCNYK).

It belongs to the CRISP family. Contains 8 disulfide bonds. As to expression, expressed by the venom gland.

It is found in the secreted. Blocks ryanodine receptors, and potassium channels. This is Cysteine-rich venom protein VAR9 from Varanus varius (Lace monitor lizard).